The primary structure comprises 167 residues: Aphrodisin (167 aa).

A signal peptide spans 1–16 (MVKILVLALVFSLAHA). Pyrrolidone carboxylic acid is present on glutamine 17. 2 disulfides stabilise this stretch: cysteine 54–cysteine 58 and cysteine 73–cysteine 165. N-linked (GlcNAc...) asparagine glycans are attached at residues asparagine 57 and asparagine 85.

This sequence belongs to the calycin superfamily. Lipocalin family. As to expression, expressed in the vagina, uterus, and Bartholin's glands of female hamsters. Secreted in vaginal discharge.

It localises to the secreted. Functionally, acts as an aphrodisiac pheromone, reliably eliciting copulatory behavior from male hamster. The polypeptide is Aphrodisin (Mesocricetus auratus (Golden hamster)).